Reading from the N-terminus, the 192-residue chain is Molybdenum cofactor guanylyltransferase (192 aa).

Residues lysine 21, aspartate 67, and aspartate 101 each coordinate GTP. Aspartate 101 contacts Mg(2+).

Belongs to the MobA family. As to quaternary structure, monomer. Mg(2+) serves as cofactor.

The protein resides in the cytoplasm. The catalysed reaction is Mo-molybdopterin + GTP + H(+) = Mo-molybdopterin guanine dinucleotide + diphosphate. Its function is as follows. Transfers a GMP moiety from GTP to Mo-molybdopterin (Mo-MPT) cofactor (Moco or molybdenum cofactor) to form Mo-molybdopterin guanine dinucleotide (Mo-MGD) cofactor. This Neisseria meningitidis serogroup C / serotype 2a (strain ATCC 700532 / DSM 15464 / FAM18) protein is Molybdenum cofactor guanylyltransferase.